The following is a 239-amino-acid chain: UPF0173 metal-dependent hydrolase DVU_3308 (239 aa).

It belongs to the UPF0173 family.

The chain is UPF0173 metal-dependent hydrolase DVU_3308 from Nitratidesulfovibrio vulgaris (strain ATCC 29579 / DSM 644 / CCUG 34227 / NCIMB 8303 / VKM B-1760 / Hildenborough) (Desulfovibrio vulgaris).